Here is a 204-residue protein sequence, read N- to C-terminus: Small ribosomal subunit protein uS4 (204 aa).

In terms of domain architecture, S4 RNA-binding spans 93–156 (SRLSSVLYHS…AKIPVIVEAV (64 aa)).

It belongs to the universal ribosomal protein uS4 family. Part of the 30S ribosomal subunit. Contacts protein S5. The interaction surface between S4 and S5 is involved in control of translational fidelity.

Functionally, one of the primary rRNA binding proteins, it binds directly to 16S rRNA where it nucleates assembly of the body of the 30S subunit. In terms of biological role, with S5 and S12 plays an important role in translational accuracy. This is Small ribosomal subunit protein uS4 from Wolbachia sp. subsp. Brugia malayi (strain TRS).